The following is a 238-amino-acid chain: tRNA1(Val) (adenine(37)-N6)-methyltransferase (238 aa).

It belongs to the methyltransferase superfamily. tRNA (adenine-N(6)-)-methyltransferase family.

The protein localises to the cytoplasm. The catalysed reaction is adenosine(37) in tRNA1(Val) + S-adenosyl-L-methionine = N(6)-methyladenosine(37) in tRNA1(Val) + S-adenosyl-L-homocysteine + H(+). Functionally, specifically methylates the adenine in position 37 of tRNA(1)(Val) (anticodon cmo5UAC). The polypeptide is tRNA1(Val) (adenine(37)-N6)-methyltransferase (Shewanella putrefaciens (strain CN-32 / ATCC BAA-453)).